Reading from the N-terminus, the 97-residue chain is Anti-sigma-YlaC factor YlaD (97 aa).

3 residues coordinate Zn(2+): His29, Cys33, and Cys36. Residues 71–93 (YYGLLIMKAACWFGAAVAMMLII) form a helical membrane-spanning segment.

It belongs to the zinc-associated anti-sigma factor (ZAS) superfamily. It depends on Zn(2+) as a cofactor.

The protein resides in the cell membrane. Anti-sigma factor for YlaC. The chain is Anti-sigma-YlaC factor YlaD (ylaD) from Bacillus subtilis (strain 168).